Reading from the N-terminus, the 147-residue chain is Large ribosomal subunit protein uL13 (147 aa).

The protein belongs to the universal ribosomal protein uL13 family. Part of the 50S ribosomal subunit.

This protein is one of the early assembly proteins of the 50S ribosomal subunit, although it is not seen to bind rRNA by itself. It is important during the early stages of 50S assembly. The polypeptide is Large ribosomal subunit protein uL13 (Leuconostoc mesenteroides subsp. mesenteroides (strain ATCC 8293 / DSM 20343 / BCRC 11652 / CCM 1803 / JCM 6124 / NCDO 523 / NBRC 100496 / NCIMB 8023 / NCTC 12954 / NRRL B-1118 / 37Y)).